The following is a 333-amino-acid chain: 4-hydroxy-3-methylbut-2-enyl diphosphate reductase (333 aa).

Cys-20 contributes to the [4Fe-4S] cluster binding site. His-49 and His-85 together coordinate (2E)-4-hydroxy-3-methylbut-2-enyl diphosphate. Residues His-49 and His-85 each contribute to the dimethylallyl diphosphate site. Isopentenyl diphosphate-binding residues include His-49 and His-85. Position 107 (Cys-107) interacts with [4Fe-4S] cluster. His-135 is a binding site for (2E)-4-hydroxy-3-methylbut-2-enyl diphosphate. Residue His-135 participates in dimethylallyl diphosphate binding. Isopentenyl diphosphate is bound at residue His-135. The Proton donor role is filled by Glu-137. (2E)-4-hydroxy-3-methylbut-2-enyl diphosphate is bound at residue Thr-176. [4Fe-4S] cluster is bound at residue Cys-206. The (2E)-4-hydroxy-3-methylbut-2-enyl diphosphate site is built by Ser-234, Ser-235, Asn-236, and Ser-279. 4 residues coordinate dimethylallyl diphosphate: Ser-234, Ser-235, Asn-236, and Ser-279. Ser-234, Ser-235, Asn-236, and Ser-279 together coordinate isopentenyl diphosphate.

This sequence belongs to the IspH family. It depends on [4Fe-4S] cluster as a cofactor.

It catalyses the reaction isopentenyl diphosphate + 2 oxidized [2Fe-2S]-[ferredoxin] + H2O = (2E)-4-hydroxy-3-methylbut-2-enyl diphosphate + 2 reduced [2Fe-2S]-[ferredoxin] + 2 H(+). It carries out the reaction dimethylallyl diphosphate + 2 oxidized [2Fe-2S]-[ferredoxin] + H2O = (2E)-4-hydroxy-3-methylbut-2-enyl diphosphate + 2 reduced [2Fe-2S]-[ferredoxin] + 2 H(+). It functions in the pathway isoprenoid biosynthesis; dimethylallyl diphosphate biosynthesis; dimethylallyl diphosphate from (2E)-4-hydroxy-3-methylbutenyl diphosphate: step 1/1. The protein operates within isoprenoid biosynthesis; isopentenyl diphosphate biosynthesis via DXP pathway; isopentenyl diphosphate from 1-deoxy-D-xylulose 5-phosphate: step 6/6. In terms of biological role, catalyzes the conversion of 1-hydroxy-2-methyl-2-(E)-butenyl 4-diphosphate (HMBPP) into a mixture of isopentenyl diphosphate (IPP) and dimethylallyl diphosphate (DMAPP). Acts in the terminal step of the DOXP/MEP pathway for isoprenoid precursor biosynthesis. The protein is 4-hydroxy-3-methylbut-2-enyl diphosphate reductase of Rhizobium etli (strain CIAT 652).